Reading from the N-terminus, the 465-residue chain is Cysteine--tRNA ligase (465 aa).

C29 serves as a coordination point for Zn(2+). Residues 31–41 (PTVYNYIHIGN) carry the 'HIGH' region motif. Zn(2+) contacts are provided by C209, H234, and E238. Positions 266 to 270 (KMSKS) match the 'KMSKS' region motif. ATP is bound at residue K269. S270 is modified (phosphoserine).

Belongs to the class-I aminoacyl-tRNA synthetase family. As to quaternary structure, monomer. Zn(2+) serves as cofactor.

It is found in the cytoplasm. The enzyme catalyses tRNA(Cys) + L-cysteine + ATP = L-cysteinyl-tRNA(Cys) + AMP + diphosphate. The polypeptide is Cysteine--tRNA ligase (Bacillus cereus (strain 03BB102)).